A 507-amino-acid polypeptide reads, in one-letter code: Secreted lipase ARB_01498 (507 aa).

Residues 1-21 (MFVQLLTYGLVAASTLQGVFA) form the signal peptide. Ser-196 acts as the Acyl-ester intermediate in catalysis. Asn-262, Asn-321, Asn-358, and Asn-416 each carry an N-linked (GlcNAc...) asparagine glycan.

This sequence belongs to the type-B carboxylesterase/lipase family.

It localises to the secreted. It carries out the reaction a triacylglycerol + H2O = a diacylglycerol + a fatty acid + H(+). The sequence is that of Secreted lipase ARB_01498 from Arthroderma benhamiae (strain ATCC MYA-4681 / CBS 112371) (Trichophyton mentagrophytes).